The sequence spans 294 residues: MSQAFRTLALLGKANNDDVNQTINALYKFLREQNYNVLTETRLAHQLPCPAEHCMDIVELGKNADLAIVVGGDGHMLGAARVLARYDVPVIGVNRGNLGFLTDLSPHDFEVSLQQVLSGDYQTEHRFLLETTIYRHGEPKSSNTALNEAVLHPGKIAHMIEYSVYIDDSFVFSQRADGMIVSTPTGSTAYALSAGGPILMPQLDVMTLVPMFPHTLSCRPIVIDAHRQVKLVISPDNPDEQLHVSCDGHVTLSVHPGDEIIIRRAPHQLTLLHPKDYDYFNVLRTKLGWSNQLF.

Residue D73 is the Proton acceptor of the active site. Residues D73 to G74, N147 to E148, H158, R175, D177, and T188 to S193 contribute to the NAD(+) site.

The protein belongs to the NAD kinase family. The cofactor is a divalent metal cation.

It is found in the cytoplasm. The catalysed reaction is NAD(+) + ATP = ADP + NADP(+) + H(+). Its function is as follows. Involved in the regulation of the intracellular balance of NAD and NADP, and is a key enzyme in the biosynthesis of NADP. Catalyzes specifically the phosphorylation on 2'-hydroxyl of the adenosine moiety of NAD to yield NADP. The polypeptide is NAD kinase (Tolumonas auensis (strain DSM 9187 / NBRC 110442 / TA 4)).